Consider the following 129-residue polypeptide: uncharacterized protein (129 aa).

This is an uncharacterized protein from Sinorhizobium fredii (strain NBRC 101917 / NGR234).